Consider the following 259-residue polypeptide: Small ribosomal subunit protein eS1 (259 aa).

The residue at position 2 (A2) is an N-acetylalanine; partial.

It belongs to the eukaryotic ribosomal protein eS1 family. As to quaternary structure, component of the small ribosomal subunit. Mature ribosomes consist of a small (40S) and a large (60S) subunit. The 40S subunit contains about 33 different proteins and 1 molecule of RNA (18S). The 60S subunit contains about 49 different proteins and 3 molecules of RNA (25S, 5.8S and 5S).

The protein resides in the cytoplasm. The protein is Small ribosomal subunit protein eS1 of Cryptococcus neoformans var. neoformans serotype D (strain B-3501A) (Filobasidiella neoformans).